The sequence spans 299 residues: Probable 3-hydroxyisobutyrate dehydrogenase-like 2, mitochondrial (299 aa).

Residues 14-43 and S108 contribute to the NAD(+) site; that span reads TRIG…TVYA. Residue K182 is part of the active site. K250 lines the NAD(+) pocket.

This sequence belongs to the HIBADH-related family. 3-hydroxyisobutyrate dehydrogenase subfamily.

The protein localises to the mitochondrion. The enzyme catalyses 3-hydroxy-2-methylpropanoate + NAD(+) = 2-methyl-3-oxopropanoate + NADH + H(+). It functions in the pathway amino-acid degradation; L-valine degradation. The sequence is that of Probable 3-hydroxyisobutyrate dehydrogenase-like 2, mitochondrial from Arabidopsis thaliana (Mouse-ear cress).